Here is a 2349-residue protein sequence, read N- to C-terminus: Reducing polyketide synthase AFT16-1 (2349 aa).

The span at 1–14 (MNGKSRDNGHDGKR) shows a compositional bias: basic and acidic residues. 2 disordered regions span residues 1 to 21 (MNGK…VPAE) and 37 to 80 (TNPS…TSNS). In terms of domain architecture, Ketosynthase family 3 (KS3) spans 20–462 (AEPIAIVGTA…GTNAHTILES (443 aa)). Catalysis depends on for beta-ketoacyl synthase activity residues Cys194, His333, and His382. The tract at residues 578–888 (VFTGQGAQWP…LLYKGVLERF (311 aa)) is malonyl-CoA:ACP transacylase (MAT) domain. An N-terminal hotdog fold region spans residues 958 to 1092 (HPLLGFRSVD…GDILLSHFAK (135 aa)). The tract at residues 958–1263 (HPLLGFRSVD…QVEGLKFSCM (306 aa)) is dehydratase (DH) domain. Residues 958–1269 (HPLLGFRSVD…FSCMYPAQET (312 aa)) form the PKS/mFAS DH domain. His990 serves as the catalytic Proton acceptor; for dehydratase activity. Residues 1111 to 1269 (MSSVEPSLFY…FSCMYPAQET (159 aa)) are C-terminal hotdog fold. The Proton donor; for dehydratase activity role is filled by Asp1170. The segment at 1976-2164 (SPNKTYLLVG…VVGVGYVARA (189 aa)) is ketoreductase (KR) domain. Residues 2273 to 2347 (EILSGSLKQK…GLCLEAIGQW (75 aa)) enclose the Carrier domain. Ser2307 carries the O-(pantetheine 4'-phosphoryl)serine modification.

Its pathway is mycotoxin biosynthesis. Functionally, reducing polyketide synthase; part of the gene clusters that mediate the biosynthesis of the host-selective toxins (HSTs) AF-toxins responsible for Alternaria black spot of strawberry disease by the strawberry pathotype. AF-toxin I and III are valine derivatives of 2,3-dyhydroxy-isovaleric acid and 2-hydroxy-isovaleric acid respectively, while AF II is an isoleucine derivative of 2-hydroxy-valeric acid. These derivatives are bound to a 9,10-epoxy-8-hydroxy-9-methyl-decatrienoic acid (EDA) moiety. On cellular level, AF-toxins affect plasma membrane of susceptible cells and cause a sudden increase in loss of K(+) after a few minutes of toxin treatment. The aldo-keto reductase AFTS1 catalyzes the conversion of 2-keto-isovaleric acid (2-KIV) to 2-hydroxy-isovaleric acid (2-HIV) by reduction of its ketone to an alcohol. The acyl-CoA ligase AFT1, the hydrolase AFT2 and the enoyl-CoA hydratases AFT3 and AFT6, but also the polyketide synthase AFT9, the acyl-CoA dehydrogenase AFT10, the cytochrome P450 monooxygenase AFT11 and the oxidoreductase AFT12 are all involved in the biosynthesis of the AK-, AF- and ACT-toxin common EDA structural moiety. The exact function of each enzyme, and of additional enzymes identified within the AF-toxin clusters have still to be determined. In Alternaria alternata (Alternaria rot fungus), this protein is Reducing polyketide synthase AFT16-1.